Consider the following 152-residue polypeptide: D-aminoacyl-tRNA deacylase (152 aa).

Residues 137–138 carry the Gly-cisPro motif, important for rejection of L-amino acids motif; the sequence is GP.

It belongs to the DTD family. As to quaternary structure, homodimer.

It is found in the cytoplasm. It carries out the reaction glycyl-tRNA(Ala) + H2O = tRNA(Ala) + glycine + H(+). The enzyme catalyses a D-aminoacyl-tRNA + H2O = a tRNA + a D-alpha-amino acid + H(+). Functionally, an aminoacyl-tRNA editing enzyme that deacylates mischarged D-aminoacyl-tRNAs. Also deacylates mischarged glycyl-tRNA(Ala), protecting cells against glycine mischarging by AlaRS. Acts via tRNA-based rather than protein-based catalysis; rejects L-amino acids rather than detecting D-amino acids in the active site. By recycling D-aminoacyl-tRNA to D-amino acids and free tRNA molecules, this enzyme counteracts the toxicity associated with the formation of D-aminoacyl-tRNA entities in vivo and helps enforce protein L-homochirality. The polypeptide is D-aminoacyl-tRNA deacylase (Thermus aquaticus).